Consider the following 367-residue polypeptide: 2-aminoethylphosphonate--pyruvate transaminase (367 aa).

An N6-(pyridoxal phosphate)lysine modification is found at K194.

The protein belongs to the class-V pyridoxal-phosphate-dependent aminotransferase family. PhnW subfamily. In terms of assembly, homodimer. Requires pyridoxal 5'-phosphate as cofactor.

The catalysed reaction is (2-aminoethyl)phosphonate + pyruvate = phosphonoacetaldehyde + L-alanine. Its function is as follows. Involved in phosphonate degradation. The sequence is that of 2-aminoethylphosphonate--pyruvate transaminase from Salmonella gallinarum (strain 287/91 / NCTC 13346).